The following is a 288-amino-acid chain: Peroxisomal protein PEX21 (288 aa).

Cys5 is covalently cross-linked (Glycyl cysteine thioester (Cys-Gly) (interchain with G-Cter in ubiquitin)).

It belongs to the peroxin-21 family. In terms of assembly, interacts with PEX7. Interacts with PEX13. Interacts with SES1. In terms of processing, monoubiquitinated at Cys-5; acts as a signal for PEX21 extraction and is required for proper export from peroxisomes and recycling.

The protein localises to the cytoplasm. The protein resides in the cytosol. Its subcellular location is the peroxisome. Receptor that mediates peroxisomal import of proteins containing a C-terminal PTS2-type peroxisomal targeting signal via its interaction with PEX7. Interaction with PEX7 only takes place when PEX7 is associated with cargo proteins containing a PTS2 peroxisomal targeting signal. PEX7 along with PTS2-containing cargo proteins are then translocated through the PEX13-PEX14 docking complex together with PEX21. Acts as an activator of the seryl-tRNA synthetase SES1 by increasing its binding to tRNA. The chain is Peroxisomal protein PEX21 (PEX21) from Saccharomyces cerevisiae (strain ATCC 204508 / S288c) (Baker's yeast).